A 368-amino-acid polypeptide reads, in one-letter code: Type 2 DNA topoisomerase 6 subunit A (368 aa).

One can recognise a Topo IIA-type catalytic domain in the interval 9-148 (PDTEEAREQL…FHMRPEESGA (140 aa)). The active-site O-(5'-phospho-DNA)-tyrosine intermediate is Y103. E201 and D253 together coordinate Mg(2+).

This sequence belongs to the TOP6A family. In terms of assembly, homodimer. Heterotetramer of two Top6A and two Top6B chains. Mg(2+) is required as a cofactor.

The catalysed reaction is ATP-dependent breakage, passage and rejoining of double-stranded DNA.. Its function is as follows. Relaxes both positive and negative superturns and exhibits a strong decatenase activity. This Haloarcula marismortui (strain ATCC 43049 / DSM 3752 / JCM 8966 / VKM B-1809) (Halobacterium marismortui) protein is Type 2 DNA topoisomerase 6 subunit A.